Here is a 201-residue protein sequence, read N- to C-terminus: Superoxide dismutase [Fe] (201 aa).

Fe cation contacts are provided by histidine 27, histidine 79, aspartate 161, and histidine 165.

It belongs to the iron/manganese superoxide dismutase family. In terms of assembly, homodimer. Fe cation is required as a cofactor.

The catalysed reaction is 2 superoxide + 2 H(+) = H2O2 + O2. In terms of biological role, destroys superoxide anion radicals which are normally produced within the cells and which are toxic to biological systems. The sequence is that of Superoxide dismutase [Fe] (sodB) from Synechococcus elongatus (strain ATCC 33912 / PCC 7942 / FACHB-805) (Anacystis nidulans R2).